Reading from the N-terminus, the 452-residue chain is tRNA modification GTPase MnmE (452 aa).

Residues arginine 21, glutamate 78, and lysine 118 each contribute to the (6S)-5-formyl-5,6,7,8-tetrahydrofolate site. The region spanning 214–375 (GMKVVIAGRP…LREHLKQAMG (162 aa)) is the TrmE-type G domain. Position 224 (asparagine 224) interacts with K(+). Residues 224–229 (NAGKSS), 243–249 (TDIAGTT), and 268–271 (DTAG) each bind GTP. A Mg(2+)-binding site is contributed by serine 228. 3 residues coordinate K(+): threonine 243, isoleucine 245, and threonine 248. Position 249 (threonine 249) interacts with Mg(2+). Lysine 452 is a binding site for (6S)-5-formyl-5,6,7,8-tetrahydrofolate.

The protein belongs to the TRAFAC class TrmE-Era-EngA-EngB-Septin-like GTPase superfamily. TrmE GTPase family. As to quaternary structure, homodimer. Heterotetramer of two MnmE and two MnmG subunits. It depends on K(+) as a cofactor.

It is found in the cytoplasm. Its function is as follows. Exhibits a very high intrinsic GTPase hydrolysis rate. Involved in the addition of a carboxymethylaminomethyl (cmnm) group at the wobble position (U34) of certain tRNAs, forming tRNA-cmnm(5)s(2)U34. The protein is tRNA modification GTPase MnmE of Haemophilus influenzae (strain ATCC 51907 / DSM 11121 / KW20 / Rd).